Reading from the N-terminus, the 271-residue chain is N-acetylaspartate synthetase (271 aa).

Residues 1–38 (MTYRGTRKSPCCSPPPRCGPPLPSGPAGSALGPPSSGA) form a disordered region. The segment covering 12–24 (CSPPPRCGPPLPS) has biased composition (pro residues). Over residues 25–37 (GPAGSALGPPSSG) the composition is skewed to low complexity. Residues 89-109 (VYAVIIIMCFVVTKSLLVTCC) form a helical membrane-spanning segment. The N-acetyltransferase domain maps to 115-258 (LGMRYYYSRK…HSLLERLFFQ (144 aa)).

Belongs to the NAT8 family.

It localises to the cytoplasm. The protein resides in the microsome membrane. The protein localises to the mitochondrion membrane. It is found in the endoplasmic reticulum membrane. The catalysed reaction is L-aspartate + acetyl-CoA = N-acetyl-L-aspartate + CoA + H(+). In terms of biological role, catalyzes the synthesis of N-acetylaspartate acid (NAA) from L-aspartate and acetyl-CoA. The sequence is that of N-acetylaspartate synthetase (nat8l) from Xenopus tropicalis (Western clawed frog).